The chain runs to 152 residues: SsrA-binding protein (152 aa).

The span at 132-142 (REAIKKRDVSD) shows a compositional bias: basic and acidic residues. A disordered region spans residues 132–152 (REAIKKRDVSDQIRSSLRRSR).

Belongs to the SmpB family.

It localises to the cytoplasm. In terms of biological role, required for rescue of stalled ribosomes mediated by trans-translation. Binds to transfer-messenger RNA (tmRNA), required for stable association of tmRNA with ribosomes. tmRNA and SmpB together mimic tRNA shape, replacing the anticodon stem-loop with SmpB. tmRNA is encoded by the ssrA gene; the 2 termini fold to resemble tRNA(Ala) and it encodes a 'tag peptide', a short internal open reading frame. During trans-translation Ala-aminoacylated tmRNA acts like a tRNA, entering the A-site of stalled ribosomes, displacing the stalled mRNA. The ribosome then switches to translate the ORF on the tmRNA; the nascent peptide is terminated with the 'tag peptide' encoded by the tmRNA and targeted for degradation. The ribosome is freed to recommence translation, which seems to be the essential function of trans-translation. This Bdellovibrio bacteriovorus (strain ATCC 15356 / DSM 50701 / NCIMB 9529 / HD100) protein is SsrA-binding protein.